An 85-amino-acid chain; its full sequence is SKP1-like protein 6 (85 aa).

The tract at residues 65–85 (MMAANYLNIQSLLDLTFSNCR) is interaction with the F-box domain of F-box proteins.

Belongs to the SKP1 family. In terms of assembly, part of a SCF (SKP1-cullin-F-box) protein ligase complex.

The protein resides in the nucleus. It participates in protein modification; protein ubiquitination. Its function is as follows. Involved in ubiquitination and subsequent proteasomal degradation of target proteins. Together with CUL1, RBX1 and a F-box protein, it forms a SCF E3 ubiquitin ligase complex. The functional specificity of this complex depends on the type of F-box protein. In the SCF complex, it serves as an adapter that links the F-box protein to CUL1. This Arabidopsis thaliana (Mouse-ear cress) protein is SKP1-like protein 6 (ASK6).